Consider the following 288-residue polypeptide: Bifunctional protein FolD (288 aa).

NADP(+) contacts are provided by residues 166–168, S191, and V232; that span reads GRS.

This sequence belongs to the tetrahydrofolate dehydrogenase/cyclohydrolase family. As to quaternary structure, homodimer.

It carries out the reaction (6R)-5,10-methylene-5,6,7,8-tetrahydrofolate + NADP(+) = (6R)-5,10-methenyltetrahydrofolate + NADPH. The catalysed reaction is (6R)-5,10-methenyltetrahydrofolate + H2O = (6R)-10-formyltetrahydrofolate + H(+). It functions in the pathway one-carbon metabolism; tetrahydrofolate interconversion. Functionally, catalyzes the oxidation of 5,10-methylenetetrahydrofolate to 5,10-methenyltetrahydrofolate and then the hydrolysis of 5,10-methenyltetrahydrofolate to 10-formyltetrahydrofolate. The polypeptide is Bifunctional protein FolD (Roseiflexus castenholzii (strain DSM 13941 / HLO8)).